Reading from the N-terminus, the 92-residue chain is Putative protein IntG (92 aa).

The protein belongs to the 'phage' integrase family.

The protein is Putative protein IntG (intG) of Escherichia coli (strain K12).